A 336-amino-acid chain; its full sequence is DNA-directed RNA polymerase subunit alpha (336 aa).

Positions 1–232 (MIQKNWQELI…DQLSVFVNFD (232 aa)) are alpha N-terminal domain (alpha-NTD). The alpha C-terminal domain (alpha-CTD) stretch occupies residues 248–336 (FNPALLKKVD…DLAKRYEDQY (89 aa)).

This sequence belongs to the RNA polymerase alpha chain family. Homodimer. The RNAP catalytic core consists of 2 alpha, 1 beta, 1 beta' and 1 omega subunit. When a sigma factor is associated with the core the holoenzyme is formed, which can initiate transcription.

The catalysed reaction is RNA(n) + a ribonucleoside 5'-triphosphate = RNA(n+1) + diphosphate. Its function is as follows. DNA-dependent RNA polymerase catalyzes the transcription of DNA into RNA using the four ribonucleoside triphosphates as substrates. The polypeptide is DNA-directed RNA polymerase subunit alpha (Sinorhizobium medicae (strain WSM419) (Ensifer medicae)).